A 322-amino-acid polypeptide reads, in one-letter code: MNNKKTGVLLVNLGTPTAPTAAAVKQFLSEFLHDKRVVDMNRFIWCPLLHGVILPIRAPKVAKLYESVWMEDGSPLLVYSQRQVKALEARLSMPVALGMTYGEPRIKSGIESLEQQGCDEIIILPLYPQYSRTTTAAVFDQIAKQYKTTPVLPNFTMIHNYHDHPLYIKALANSVRQSWERNGKGDYVLCSYHGIPQRFVDNGDIYATHCERTTELLAQELGLTSEQIGMSYQSRFGREEWLQPYTSETLKVLAPKGIKSLDIISPAFSSDCLETLEELSEECKEIFMESGGQKYTFIPCLNDDELHIEMMADIVSSKIFNK.

Fe cation is bound by residues His193 and Glu274.

The protein belongs to the ferrochelatase family.

It is found in the cytoplasm. It catalyses the reaction heme b + 2 H(+) = protoporphyrin IX + Fe(2+). Its pathway is porphyrin-containing compound metabolism; protoheme biosynthesis; protoheme from protoporphyrin-IX: step 1/1. Its function is as follows. Catalyzes the ferrous insertion into protoporphyrin IX. In Aliivibrio fischeri (strain MJ11) (Vibrio fischeri), this protein is Ferrochelatase.